We begin with the raw amino-acid sequence, 63 residues long: Male accessory gland serine protease inhibitor (63 aa).

One can recognise a BPTI/Kunitz inhibitor domain in the interval 6–62; that stretch reads CGEPHSLDGSPNGISCRGYFPSWSYNPDAQQCVSFVYGGCGGNNNRFGSQNECEERC. 3 disulfide bridges follow: Cys-6/Cys-62, Cys-21/Cys-45, and Cys-37/Cys-58.

Serine protease inhibitor. This peptide can inhibit, in-vivo, acrosin and, to a lower level, plasma kallikrein. It probably plays a role in Drosophila reproduction. The chain is Male accessory gland serine protease inhibitor (PapD) from Drosophila funebris (Fruit fly).